The primary structure comprises 295 residues: Protease HtpX (295 aa).

The next 2 membrane-spanning stretches (helical) occupy residues 4–24 and 34–54; these read IVLFLLTNLAVMLVFGIILSL and GLMIMAGLFGFGGAFVSLLMS. His-139 lines the Zn(2+) pocket. Residue Glu-140 is part of the active site. His-143 is a binding site for Zn(2+). 2 helical membrane passes run 147 to 167 and 194 to 214; these read GDMVTMTLLQGIVNTFVIFIS and IVYMVASMVLEIVFGILASII. A Zn(2+)-binding site is contributed by Glu-223.

It belongs to the peptidase M48B family. It depends on Zn(2+) as a cofactor.

The protein localises to the cell inner membrane. This chain is Protease HtpX, found in Photorhabdus laumondii subsp. laumondii (strain DSM 15139 / CIP 105565 / TT01) (Photorhabdus luminescens subsp. laumondii).